Consider the following 162-residue polypeptide: Solute carrier family 2, facilitated glucose transporter member 4 (162 aa).

Over 1–13 (TSIFETAGVGQPA) the chain is Extracellular. The helical transmembrane segment at 14–34 (YATIGAGVVNTVFTLVSVFLV) threads the bilayer. Asn-23 contributes to the D-glucose binding site. At 35-43 (ERAGRRTLH) the chain is on the cytoplasmic side. The chain crosses the membrane as a helical span at residues 44–64 (LLGLAGMCGCAILMTIALLLL). The Extracellular segment spans residues 65–75 (ERLPAMSYVSI). A helical transmembrane segment spans residues 76–96 (VAIFGFVAFFEIGPGPIPWFI). Residues Glu-86 and Trp-94 each contribute to the D-glucose site. Topologically, residues 97 to 107 (VAELFSQGPRP) are cytoplasmic. Residues 108-128 (AAMAVAGFCNWTSNFIIGMGF) form a helical membrane-spanning segment. Over 129–135 (QYIAXAM) the chain is Extracellular. The chain crosses the membrane as a helical span at residues 136 to 156 (GPYVFLLFAVLLLAFFIFTFL). Residues 157–162 (KVPETR) are Cytoplasmic-facing.

This sequence belongs to the major facilitator superfamily. Sugar transporter (TC 2.A.1.1) family. Glucose transporter subfamily. Binds to DAXX. Interacts via its N-terminus with SRFBP1. Interacts with NDUFA9. Interacts with TRARG1; the interaction is required for proper SLC2A4 recycling after insulin stimulation. Sumoylated. Post-translationally, palmitoylated. Palmitoylation by ZDHHC7 controls the insulin-dependent translocation of GLUT4 to the plasma membrane.

The protein resides in the cell membrane. The protein localises to the endomembrane system. It localises to the cytoplasm. It is found in the perinuclear region. It carries out the reaction D-glucose(out) = D-glucose(in). Functionally, insulin-regulated facilitative glucose transporter, which plays a key role in removal of glucose from circulation. Response to insulin is regulated by its intracellular localization: in the absence of insulin, it is efficiently retained intracellularly within storage compartments in muscle and fat cells. Upon insulin stimulation, translocates from these compartments to the cell surface where it transports glucose from the extracellular milieu into the cell. This chain is Solute carrier family 2, facilitated glucose transporter member 4, found in Canis lupus familiaris (Dog).